The sequence spans 1839 residues: DNA-directed RNA polymerase II subunit RPB1 (1839 aa).

The Zn(2+) site is built by Cys-66, Cys-69, Cys-76, His-79, Cys-106, Cys-109, and Cys-147. A disordered region spans residues 152-174 (DIDDVQSHSTDEPVKKSRGGCGA). Basic and acidic residues predominate over residues 156 to 166 (VQSHSTDEPVK). Residue Cys-172 coordinates Zn(2+). A DNA-binding region spans residues 326–397 (TQKSGRPIKS…PETVTPYNIE (72 aa)). Asp-495, Asp-497, and Asp-499 together coordinate Mg(2+). Residues 785–795 (GQQNVEGKRIP) are alpha-amanitin binding. The segment at 829–841 (PQEFFFHAMGGRE) is bridging helix. Over residues 1538-1726 (PSSSPGYSPS…PSYGPTSPSY (189 aa)) the composition is skewed to low complexity. Positions 1538-1839 (PSSSPGYSPS…DASKDDKGNP (302 aa)) are disordered. 27 repeat units span residues 1544–1550 (YSPSSPG), 1551–1557 (YSPTSPG), 1558–1564 (YSPTSPG), 1565–1571 (YSPTSPG), 1572–1578 (YSPTSPT), 1579–1585 (YSPSSPG), 1586–1592 (YSPTSPA), 1593–1599 (YSPTSPS), 1600–1606 (YSPTSPS), 1607–1613 (YSPTSPS), 1614–1620 (YSPTSPS), 1621–1627 (YSPTSPS), 1628–1634 (YSPTSPS), 1635–1641 (YSPTSPA), 1642–1648 (YSPTSPA), 1649–1655 (YSPTSPA), 1656–1662 (YSPTSPS), 1663–1669 (YSPTSPS), 1670–1676 (YSPTSPS), 1677–1683 (YSPTSPS), 1684–1690 (YSPTSPS), 1691–1697 (YSPTSPA), 1698–1704 (YSPTSPG), 1705–1711 (YSPTSPS), 1712–1718 (YSPTSPS), 1719–1725 (YGPTSPS), and 1726–1732 (YNPQSAK). The segment at 1544 to 1813 (YSPSSPGYSP…LPGYSPSSTG (270 aa)) is C-terminal domain (CTD); 37 X 7 AA tandem approximate repeats of Y-[GNS]-P-[QST]-[LNS]-[APT]-[AGKNRSTY]. A compositionally biased stretch (polar residues) spans 1727–1745 (NPQSAKYSPSIAYSPSNAR). Residues 1733–1738 (YSPSIA) form a 28; approximate repeat. 6 tandem repeats follow at residues 1739–1745 (YSPSNAR), 1752–1758 (YSPTSPN), 1759–1765 (YSPTSPS), 1766–1772 (YSPTSPS), 1773–1779 (YSPSSPT), and 1780–1786 (YSPSSPY). Residues 1747–1798 (SPASPYSPTSPNYSPTSPSYSPTSPSYSPSSPTYSPSSPYSSGASPDYSPSA) are compositionally biased toward low complexity. The stretch at 1794-1799 (YSPSAG) is one 35; approximate repeat. 2 consecutive repeat copies span residues 1800–1806 (YSPTLPG) and 1807–1813 (YSPSSTG). A compositionally biased stretch (basic and acidic residues) spans 1818 to 1839 (HEGDKKDKTGKKDASKDDKGNP).

The protein belongs to the RNA polymerase beta' chain family. In terms of assembly, component of the RNA polymerase II (Pol II) complex consisting of at least 12 subunits. Interacts with RDM1. Interacts (via CTD) with PRP40A, PRP40B, PRP40C and CYP59. Interacts with MEE12/CCG1 and MEE14/CBP1. Binds (via CTD) to ATX1, especially when phosphorylated on 'Ser-5' of the heptapeptide repeat. In terms of processing, the tandem 7 residues repeats in the C-terminal domain (CTD) can be highly phosphorylated. The phosphorylation activates Pol II. Phosphorylation occurs mainly at residues 'Ser-2' and 'Ser-5' of the heptapeptide repeat. The phosphorylation state is believed to result from the balanced action of site-specific CTD kinases and phosphatase, and a 'CTD code' that specifies the position of Pol II within the transcription cycle has been proposed. ATX1 seems to regulate phosphorylation statment. 'Ser-2' and 'Ser-5' phosphorylation are repressed by flavopiridol (Flap) and seliciclib (Selic), inhibitors of CDK7 and CDK9.

It is found in the nucleus. It carries out the reaction RNA(n) + a ribonucleoside 5'-triphosphate = RNA(n+1) + diphosphate. Functionally, DNA-dependent RNA polymerase catalyzes the transcription of DNA into RNA using the four ribonucleoside triphosphates as substrates. Largest and catalytic component of RNA polymerase II which synthesizes mRNA precursors and many functional non-coding RNAs. Forms the polymerase active center together with the second largest subunit. Pol II is the central component of the basal RNA polymerase II transcription machinery. It is composed of mobile elements that move relative to each other. NRPB1 is part of the core element with the central large cleft, the clamp element that moves to open and close the cleft and the jaws that are thought to grab the incoming DNA template. At the start of transcription, a single-stranded DNA template strand of the promoter is positioned within the central active site cleft of Pol II. A bridging helix emanates from NRPB1 and crosses the cleft near the catalytic site and is thought to promote translocation of Pol II by acting as a ratchet that moves the RNA-DNA hybrid through the active site by switching from straight to bent conformations at each step of nucleotide addition. During transcription elongation, Pol II moves on the template as the transcript elongates. Elongation is influenced by the phosphorylation status of the C-terminal domain (CTD) of Pol II largest subunit (NRPB1), which serves as a platform for assembly of factors that regulate transcription initiation, elongation, termination and mRNA processing. The chain is DNA-directed RNA polymerase II subunit RPB1 from Arabidopsis thaliana (Mouse-ear cress).